Reading from the N-terminus, the 243-residue chain is Transmembrane protein 174 (243 aa).

Transmembrane regions (helical) follow at residues 40-60 (LLFS…MGWI) and 73-93 (LLGP…VCKF).

Interacts with SLC34A1; regulates SLC34A1 internalization by PTH and FGF23. As to expression, kidney specific. Expressed in renal primary proximal tubule cells.

Its subcellular location is the endoplasmic reticulum membrane. The protein localises to the apical cell membrane. In terms of biological role, regulator of plasma phosphate homeostasis. Decreases serum inorganic phosphate (Pi) uptake by regulating the sodium-phosphate cotransporter SLC34A1 trafficking by PTH and FGF23 in the kidney. The polypeptide is Transmembrane protein 174 (Tmem174) (Mus musculus (Mouse)).